Reading from the N-terminus, the 2146-residue chain is Conidial pigment polyketide synthase alb1 (2146 aa).

An N-terminal acylcarrier protein transacylase domain (SAT) region spans residues 8–244; sequence YLFGDQTISC…KAPGVSGPYH (237 aa). One can recognise a Ketosynthase family 3 (KS3) domain in the interval 375–806; it reads RSKIAIIGMS…GGNTALLMED (432 aa). Residues cysteine 547, histidine 682, and histidine 724 each act as for beta-ketoacyl synthase activity in the active site. Residues 911-1232 form a malonyl-CoA:ACP transacylase (MAT) domain region; that stretch reads GFVFTGQGAQ…LSTLHLAGVE (322 aa). The active-site For acyl/malonyl transferase activity is the serine 1001. Residues 1290 to 1602 are product template (PT) domain; that stretch reads TTAAQKIVEC…ARKILDTVLP (313 aa). The N-terminal hotdog fold stretch occupies residues 1294–1427; it reads QKIVECREDG…VKLFNCAERE (134 aa). Positions 1294 to 1598 constitute a PKS/mFAS DH domain; sequence QKIVECREDG…FQALARKILD (305 aa). The active-site Proton acceptor; for dehydratase activity is histidine 1326. The tract at residues 1453-1598 is C-terminal hotdog fold; that stretch reads AHRMQRGMVY…FQALARKILD (146 aa). Aspartate 1511 acts as the Proton donor; for dehydratase activity in catalysis. Residues 1611–1644 are disordered; sequence GAPAPAPARPIGEKKAPPPIKVTGPPKPNPSNAR. Pro residues predominate over residues 1627–1639; sequence PPPIKVTGPPKPN. The region spanning 1647–1721 is the Carrier 1 domain; sequence SPVVARALEI…DFKAYLAEKG (75 aa). Serine 1681 carries the O-(pantetheine 4'-phosphoryl)serine modification. The tract at residues 1724–1769 is disordered; sequence DSSSPEPSSEPESKFSFNSDASSEASSGLTTPGITSPVKHEAPKGG. Over residues 1738 to 1750 the composition is skewed to low complexity; sequence FSFNSDASSEASS. Residues 1768-1845 enclose the Carrier 2 domain; sequence GGQNKVWKSI…AVQAALDLKP (78 aa). Residue serine 1805 is modified to O-(pantetheine 4'-phosphoryl)serine. Residues 1892–2019 are claisen cyclase domain; that stretch reads KLFMFPDGSG…SIGLFGDGKR (128 aa). Serine 1962 functions as the For Claisen cyclase activity in the catalytic mechanism.

The protein resides in the endosome. It carries out the reaction 6 malonyl-CoA + acetyl-CoA + 6 H(+) = naphtopyrone YWA1 + 6 CO2 + 7 CoA + H2O. The protein operates within pigment biosynthesis; melanin biosynthesis. Its function is as follows. Non-reducing polyketide synthase; part of the gene cluster that mediates the biosynthesis of dihydroxynaphthalene (DHN)-melanin, a bluish-green pigment and a structural component of the conidial wall. The first step of the pathway is the production of the heptaketide naphtopyrone YWA1 by the polyketide synthase alb1 though condensation of acetyl-CoA with malonyl-CoA. The naphtopyrone YWA1 is then converted to the pentaketide 1,3,6,8-tetrahydroxynaphthalene (1,3,6,8-THN) by the heptaketide hydrolyase ayg1 though chain-length shortening. 1,3,6,8-THN is substrate of the hydroxynaphthalene reductase arp2 to yield scytalone. The scytalone dehydratase arp1 then reduces scytalone to 1,3,8-THN. 1,3,8-THN is also substrate of the hydroxynaphthalene reductase arp2 to yield vermelone. Vermelone is further converted by the multicopper oxidase abr1 to 1,8-DHN. Finally the laccase abr2 transforms 1,8-DHN to DHN-melanin. DHN-melanin biosynthesis appears to be initiated in endosomes where early enzymes (abl1, ayg1, arp1 and arp2) localize, with exocytosis leading to melanin deposition on the cell surface where late enzymes (abr1 and abr2) localize. DHN-melanin is an important structural component of the outer cell wall and is required for the presence of conidial surface hydrophobins. DHN-melanin also plays a crucial role in fungal virulence, including a protective role against the host's immune defenses. DHN-melanin protects also conidia against amoeba predation. The polypeptide is Conidial pigment polyketide synthase alb1 (Aspergillus fumigatus (strain ATCC MYA-4609 / CBS 101355 / FGSC A1100 / Af293) (Neosartorya fumigata)).